The primary structure comprises 357 residues: Glutamine synthetase root isozyme B (357 aa).

A GS beta-grasp domain is found at 19 to 99 (IIAEYIWVGG…VICDVYTPAG (81 aa)). In terms of domain architecture, GS catalytic spans 106–357 (KRYNAAKIFS…AETTILWKKS (252 aa)).

It belongs to the glutamine synthetase family. Homooctamer.

It localises to the cytoplasm. The enzyme catalyses L-glutamate + NH4(+) + ATP = L-glutamine + ADP + phosphate + H(+). This is Glutamine synthetase root isozyme B (GS3B) from Pisum sativum (Garden pea).